The chain runs to 1387 residues: DNA-directed RNA polymerase subunit beta (1387 aa).

It belongs to the RNA polymerase beta chain family. The RNAP catalytic core consists of 2 alpha, 1 beta, 1 beta' and 1 omega subunit. When a sigma factor is associated with the core the holoenzyme is formed, which can initiate transcription.

The catalysed reaction is RNA(n) + a ribonucleoside 5'-triphosphate = RNA(n+1) + diphosphate. Its function is as follows. DNA-dependent RNA polymerase catalyzes the transcription of DNA into RNA using the four ribonucleoside triphosphates as substrates. The polypeptide is DNA-directed RNA polymerase subunit beta (Xanthomonas campestris pv. campestris (strain ATCC 33913 / DSM 3586 / NCPPB 528 / LMG 568 / P 25)).